The chain runs to 121 residues: RxLR effector protein PexRD2 (121 aa).

Positions 1–18 (MRLSYVFVVFAASLLVTA) are cleaved as a signal peptide. The RxLR-dEER signature appears at 38–56 (RLLRKHYTAAENDGDSEAR). The interval 57 to 121 (ALNPEKMKTM…LNYVAEHTAV (65 aa)) is WY domain.

It belongs to the RxLR effector family.

It is found in the secreted. It localises to the host cytoplasm. Its subcellular location is the host nucleus. Its function is as follows. Secreted effector involved in P.mirabilis colonization of host plants. May perturb the signaling of cell death associated with plant immunity, via interaction with a host MAP kinase. This chain is RxLR effector protein PexRD2, found in Phytophthora mirabilis.